We begin with the raw amino-acid sequence, 402 residues long: Endoplasmic reticulum junction formation protein lunapark-B (402 aa).

At 1-45 the chain is on the cytoplasmic side; that stretch reads MGAIISRWKTKPSTVELLESLDKDIKDLEEFRAKNQRLLKLWVGR. Residues 46-66 form a helical membrane-spanning segment; the sequence is LLFYSSALYLLTCLCVYYLYF. At 67-77 the chain is on the lumenal side; the sequence is PQQWGARLITA. Residues 78 to 98 traverse the membrane as a helical segment; the sequence is LPLLAFPALVLLLRKMLIFLF. Over 99–402 the chain is Cytoplasmic; sequence SKRTERNNDK…EEQKKEDESN (304 aa). Positions 100–128 form a coiled coil; sequence KRTERNNDKLEDLKTQKRKILEEVMETET. Residues 142 to 240 are disordered; the sequence is ESKKKAEAEA…PGPGSGMRPP (99 aa). The segment covering 205–222 has biased composition (polar residues); that stretch reads SASTPAGASQAETPQQMM. The C4-type; plays a role in ER morphology zinc-finger motif lies at 276–301; it reads CQQCFSHNGMALKEEFEFVAFRCAYC. The tract at residues 311-402 is disordered; the sequence is RPQAPRLPEF…EEQKKEDESN (92 aa). Residues 321 to 330 are compositionally biased toward basic and acidic residues; it reads SFERRLRSES. Residues 341–352 show a composition bias toward acidic residues; it reads TPEDSDAPEDDM. Residues 385–402 are compositionally biased toward basic and acidic residues; the sequence is PHAEAEALEEQKKEDESN.

This sequence belongs to the lunapark family. In terms of assembly, homodimer; homodimerization requires the C4-type zinc finger motif and decreases during mitosis in a phosphorylation-dependent manner. Post-translationally, phosphorylated. Phosphorylation occurs during interphase. Phosphorylation also occurs during mitosis; these phosphorylations reduce both its homodimerization and the ER three-way tubular junction formation.

The protein resides in the endoplasmic reticulum membrane. Functionally, endoplasmic reticulum (ER)-shaping membrane protein that plays a role in determining ER morphology. Involved in the stabilization of nascent three-way ER tubular junctions within the ER network. May also play a role as a curvature-stabilizing protein within three-way ER tubular junction network. The chain is Endoplasmic reticulum junction formation protein lunapark-B (lnpkb) from Danio rerio (Zebrafish).